The following is a 181-amino-acid chain: uncharacterized protein (181 aa).

Topologically, residues 1–14 (MQKCIMRSTEFKTH) are cytoplasmic. The chain crosses the membrane as a helical span at residues 15–35 (FSFHSIFSFPLSAALLALISA). Topologically, residues 36 to 58 (SEPASKAFINVQFISSPLVKKEV) are extracellular. A helical membrane pass occupies residues 59-79 (LPFIVSFHSLSSNGILSFSPF). Topologically, residues 80-84 (TSSNL) are cytoplasmic. A helical membrane pass occupies residues 85 to 105 (SIAQLPFLIKVPLLSMGSLAL). Residues 106–116 (ENFNKFIPRAD) are Extracellular-facing. Residues 117 to 137 (LVAAWVTIIMVFTFGNFLSTL) form a helical membrane-spanning segment. Residues 138 to 153 (SIKTGQNLWHLSKISS) are Cytoplasmic-facing. A helical membrane pass occupies residues 154-174 (SVSPLLLGIILGSQSGEIMLG). The Extracellular segment spans residues 175–181 (KNLLITS).

Its subcellular location is the membrane. This is an uncharacterized protein from Saccharomyces cerevisiae (strain ATCC 204508 / S288c) (Baker's yeast).